The sequence spans 407 residues: Probable sodium/metabolite cotransporter BASS5, chloroplastic (407 aa).

Residues 1–57 constitute a chloroplast transit peptide; the sequence is MGVISPTETLFLKSQHRLLQPRNYSYALAFHSTRRVANFPRNSFSSLGSCSVDFPLR. 9 helical membrane-spanning segments follow: residues 101–121, 122–142, 162–184, 191–213, 222–242, 252–272, 286–306, 317–337, and 379–399; these read FIPH…PSFT, WFKP…VGIN, YIGQ…VSLF, GAGI…TFLT, IVMT…LSLL, VFGM…AGLL, PFLP…PLAL, ATIL…GYFF, and LVGV…VSLV.

The protein belongs to the bile acid:sodium symporter (BASS) (TC 2.A.28) family. Widely expressed.

It localises to the membrane. The protein resides in the plastid. It is found in the chloroplast envelope. Functionally, plastidic transporter involved in the biosynthesis of aliphatic glucosinolates by translocating the biosynthetic intermediates of Met-derived glucosinolates across chloroplast membranes. Transports short chain (C2) alpha-keto acids, such as 4-methylsulfanyl-2-oxobutanoic acid, from the cytosol to the chloroplast where they are subjected to chain elongation cycles. Also functions in the transport of chain-elongated (C3 to C8) Met derivatives from the chloroplast to the cytosol. Does not seem to be involved in the transport of indole-derived glucosinolates. The protein is Probable sodium/metabolite cotransporter BASS5, chloroplastic (BASS5) of Arabidopsis thaliana (Mouse-ear cress).